The primary structure comprises 647 residues: Acetyl-coenzyme A synthetase (647 aa).

CoA is bound by residues 190-193 (RGGK), Thr-310, and Asn-334. Residues 386–388 (GEP), 410–415 (DTWWQT), Asp-499, and Arg-514 each bind ATP. A CoA-binding site is contributed by Ser-522. Arg-525 contacts ATP. 3 residues coordinate Mg(2+): Val-536, His-538, and Val-541. Arg-583 lines the CoA pocket. Lys-608 is subject to N6-acetyllysine.

It belongs to the ATP-dependent AMP-binding enzyme family. The cofactor is Mg(2+). Post-translationally, acetylated. Deacetylation by the SIR2-homolog deacetylase activates the enzyme.

It catalyses the reaction acetate + ATP + CoA = acetyl-CoA + AMP + diphosphate. Catalyzes the conversion of acetate into acetyl-CoA (AcCoA), an essential intermediate at the junction of anabolic and catabolic pathways. AcsA undergoes a two-step reaction. In the first half reaction, AcsA combines acetate with ATP to form acetyl-adenylate (AcAMP) intermediate. In the second half reaction, it can then transfer the acetyl group from AcAMP to the sulfhydryl group of CoA, forming the product AcCoA. The sequence is that of Acetyl-coenzyme A synthetase from Xanthomonas oryzae pv. oryzae (strain MAFF 311018).